The following is a 550-amino-acid chain: MTNVVVSGEQLQEAFREVAVMVDSTVAITAGPRGKTVGINKPYGAPEITKDGYKVMKGIKPEKPLHAAITSIFAQSCFQCNDKVGDGTTTCSILTSNMIMEALKSIAAGNDRVSIKNGMQKAKDAVLEGITSMSRTIPLEKMDEVAQVAIISANGDKDIGNSIADAVKKVGKEGVITVEESKGSKELEVELTTGMQFDRGYLSPYFITSNEKMIVEFDDPYLLITEKKLSIIQPLLPILEAVVKSGKPLLIIAEDIEGEALSTLVINKLRGGLKVTAVKAPGFGDRRKEMLEDIAALTGAKYVIKDELGIKMEDLTLEDLGTAKNVKVTKDNTTIVSGSSDSDRVKARVEQIKSQIETSTSDYDKEKLRERLAKLSGGVAVLKVGGVTEVEVKERRDRVEDALHATRAAIEEGIVPGGGVALLYASSALDKLKGGSDEEQIGINIIKKVLSAPIKRLVKNAGLESAVIIDHLTKQNDKELIYNVEAMNYANAFTAGVIDPAKVVRIAFETAISVASVLITTESMIVDVPNKEENASSSMGAGGMGGMNGF.

Residues 29–32 (TAGP), Lys-50, 86–90 (DGTTT), Gly-418, and Asp-499 each bind ATP.

The protein belongs to the chaperonin (HSP60) family. As to quaternary structure, forms a cylinder of 14 subunits composed of two heptameric rings stacked back-to-back. Interacts with the co-chaperonin GroES.

The protein localises to the cytoplasm. It catalyses the reaction ATP + H2O + a folded polypeptide = ADP + phosphate + an unfolded polypeptide.. Together with its co-chaperonin GroES, plays an essential role in assisting protein folding. The GroEL-GroES system forms a nano-cage that allows encapsulation of the non-native substrate proteins and provides a physical environment optimized to promote and accelerate protein folding. In Wolbachia sp. subsp. Brugia malayi (strain TRS), this protein is Chaperonin GroEL.